A 274-amino-acid polypeptide reads, in one-letter code: Formamidopyrimidine-DNA glycosylase (274 aa).

Catalysis depends on P2, which acts as the Schiff-base intermediate with DNA. The Proton donor role is filled by E3. The Proton donor; for beta-elimination activity role is filled by K57. Positions 90, 109, and 150 each coordinate DNA. The FPG-type zinc-finger motif lies at 235–269; sequence FVYGRKDKACLICGHTIESIKQGQRSTFFCRHCQH. The Proton donor; for delta-elimination activity role is filled by R259.

This sequence belongs to the FPG family. As to quaternary structure, monomer. Requires Zn(2+) as cofactor.

The catalysed reaction is Hydrolysis of DNA containing ring-opened 7-methylguanine residues, releasing 2,6-diamino-4-hydroxy-5-(N-methyl)formamidopyrimidine.. The enzyme catalyses 2'-deoxyribonucleotide-(2'-deoxyribose 5'-phosphate)-2'-deoxyribonucleotide-DNA = a 3'-end 2'-deoxyribonucleotide-(2,3-dehydro-2,3-deoxyribose 5'-phosphate)-DNA + a 5'-end 5'-phospho-2'-deoxyribonucleoside-DNA + H(+). Involved in base excision repair of DNA damaged by oxidation or by mutagenic agents. Acts as a DNA glycosylase that recognizes and removes damaged bases. Has a preference for oxidized purines, such as 7,8-dihydro-8-oxoguanine (8-oxoG). Has AP (apurinic/apyrimidinic) lyase activity and introduces nicks in the DNA strand. Cleaves the DNA backbone by beta-delta elimination to generate a single-strand break at the site of the removed base with both 3'- and 5'-phosphates. This chain is Formamidopyrimidine-DNA glycosylase, found in Proteus mirabilis (strain HI4320).